The sequence spans 138 residues: BPTI/Kunitz domain-containing protein 1 (138 aa).

An N-terminal signal peptide occupies residues 1 to 19 (MYTLYILSLLCAFVTFSEC). The 51-residue stretch at 72 to 122 (CTLPRKIGPCRASIPRYYFNFVTKRCELFFWGGCQPNKNNFETIYDCQGYC) folds into the BPTI/Kunitz inhibitor domain. Intrachain disulfides connect Cys72-Cys122, Cys81-Cys105, and Cys97-Cys118.

In terms of tissue distribution, prismatic layer of shell (at protein level). Expressed primarily in the mantle with highest level in the mantle edge and lower level in the mantle pallium.

Its subcellular location is the secreted. This Pinctada maxima (Silver-lipped pearl oyster) protein is BPTI/Kunitz domain-containing protein 1.